A 227-amino-acid polypeptide reads, in one-letter code: Probable septum site-determining protein MinC (227 aa).

This sequence belongs to the MinC family. As to quaternary structure, interacts with MinD and FtsZ.

In terms of biological role, cell division inhibitor that blocks the formation of polar Z ring septums. Rapidly oscillates between the poles of the cell to destabilize FtsZ filaments that have formed before they mature into polar Z rings. Prevents FtsZ polymerization. The sequence is that of Probable septum site-determining protein MinC from Shouchella clausii (strain KSM-K16) (Alkalihalobacillus clausii).